Reading from the N-terminus, the 489-residue chain is MTHQIVTTQYGKVKGTTENGVHKWKGIPYAKPPVGQWRFKAPEPPEVWEDVLDATAYGSICPQPSDLLSLSYTELPRQSEDCLYVNVFAPDTPSKNLPVMVWIHGGAFYLGAGSEPLYDGSKLAAQGEVIVVTLNYRLGPFGFLHLSSFNEAYSDNLGLLDQAAALKWVRENISAFGGDPDNVTVFGESAGGMSIAALLAMPAAKGLFQKAIMESGASRTMTKEQAASTSAAFLQVLGINEGQLDKLHTVSAEDLLKAADQLRIAEKENIFQLFFQPALDPKTLPEEPEKAIAEGAASGIPLLIGTTRDEGYLFFTPDSDVHSQETLDAALEYLLGKPLAEKVADLYPRSLESQIHMMTDLLFWRPAVAYASAQSHYAPVWMYRFDWHPKKPPYNKAFHALELPFVFGNLDGLERMAKAEITDEVKQLSHTIQSAWITFAKTGNPSTEAVNWPAYHEETRETLILDSEITIENDPESEKRQKLFPSKGE.

S189 acts as the Acyl-ester intermediate in catalysis. A Phosphoserine modification is found at S189. Active-site charge relay system residues include E310 and H399.

The protein belongs to the type-B carboxylesterase/lipase family. As to quaternary structure, monomer.

Functionally, catalyzes hydrolysis of several beta-lactam antibiotic PNB esters to the corresponding free acid and PNB alcohol. The protein is Para-nitrobenzyl esterase (pnbA) of Bacillus subtilis (strain 168).